A 304-amino-acid polypeptide reads, in one-letter code: Probable porphobilinogen deaminase (304 aa).

Cys240 is subject to S-(dipyrrolylmethanemethyl)cysteine.

Belongs to the HMBS family. It depends on dipyrromethane as a cofactor.

It carries out the reaction 4 porphobilinogen + H2O = hydroxymethylbilane + 4 NH4(+). It functions in the pathway porphyrin-containing compound metabolism; protoporphyrin-IX biosynthesis; coproporphyrinogen-III from 5-aminolevulinate: step 2/4. In terms of biological role, tetrapolymerization of the monopyrrole PBG into the hydroxymethylbilane pre-uroporphyrinogen in several discrete steps. The sequence is that of Probable porphobilinogen deaminase from Ignicoccus hospitalis (strain KIN4/I / DSM 18386 / JCM 14125).